The following is a 191-amino-acid chain: Potassium-transporting ATPase KdpC subunit (191 aa).

Residues 13-35 (VLFTGLCGLAYPLAITGVAQAVL) form a helical membrane-spanning segment. Residues 112 to 132 (SGPVPADAVTSSASGLDPDIS) are disordered.

The protein belongs to the KdpC family. The system is composed of three essential subunits: KdpA, KdpB and KdpC.

The protein localises to the cell inner membrane. In terms of biological role, part of the high-affinity ATP-driven potassium transport (or Kdp) system, which catalyzes the hydrolysis of ATP coupled with the electrogenic transport of potassium into the cytoplasm. This subunit acts as a catalytic chaperone that increases the ATP-binding affinity of the ATP-hydrolyzing subunit KdpB by the formation of a transient KdpB/KdpC/ATP ternary complex. The sequence is that of Potassium-transporting ATPase KdpC subunit from Allorhizobium ampelinum (strain ATCC BAA-846 / DSM 112012 / S4) (Agrobacterium vitis (strain S4)).